The primary structure comprises 349 residues: tRNA pseudouridine synthase D (349 aa).

Phenylalanine 27 is a substrate binding site. Aspartate 80 (nucleophile) is an active-site residue. A substrate-binding site is contributed by asparagine 129. Residues 155-303 enclose the TRUD domain; sequence GVPNYFGAQR…VEAARRAMLL (149 aa). Phenylalanine 329 contributes to the substrate binding site.

Belongs to the pseudouridine synthase TruD family.

The catalysed reaction is uridine(13) in tRNA = pseudouridine(13) in tRNA. Responsible for synthesis of pseudouridine from uracil-13 in transfer RNAs. This is tRNA pseudouridine synthase D from Escherichia coli O8 (strain IAI1).